The chain runs to 309 residues: Homoserine O-succinyltransferase (309 aa).

Cys-142 (acyl-thioester intermediate) is an active-site residue. Substrate is bound by residues Lys-163 and Ser-192. The active-site Proton acceptor is the His-235. Glu-237 is a catalytic residue. Arg-249 contacts substrate.

This sequence belongs to the MetA family.

The protein localises to the cytoplasm. It carries out the reaction L-homoserine + succinyl-CoA = O-succinyl-L-homoserine + CoA. Its pathway is amino-acid biosynthesis; L-methionine biosynthesis via de novo pathway; O-succinyl-L-homoserine from L-homoserine: step 1/1. Its function is as follows. Transfers a succinyl group from succinyl-CoA to L-homoserine, forming succinyl-L-homoserine. The chain is Homoserine O-succinyltransferase from Yersinia enterocolitica serotype O:8 / biotype 1B (strain NCTC 13174 / 8081).